The chain runs to 185 residues: Gastrokine-1 (185 aa).

The N-terminal stretch at 1–20 (MKFTIVFAGLLGVFLAPALA) is a signal peptide. The BRICHOS domain maps to 54–150 (NNGWDSWNSI…MCRGIPTYMA (97 aa)). The cysteines at positions 81 and 142 are disulfide-linked.

It belongs to the gastrokine family. As to expression, expressed in stomach (at protein level). No expression is detected in cancer tissue or gastric cancer cell lines.

The protein localises to the secreted. It localises to the cytoplasmic granule. The protein resides in the golgi apparatus. Its function is as follows. Has mitogenic activity and may be involved in maintaining the integrity of the gastric mucosal epithelium. The sequence is that of Gastrokine-1 (GKN1) from Homo sapiens (Human).